A 459-amino-acid chain; its full sequence is uncharacterized protein (459 aa).

This is an uncharacterized protein from Orgyia pseudotsugata (Douglas-fir tussock moth).